Here is a 445-residue protein sequence, read N- to C-terminus: Clusterin (445 aa).

Residues 1 to 22 (MMKTLLLLVGLLLTWDNGRVLG) form the signal peptide. The Nuclear localization signal motif lies at 78–81 (KKKK). N-linked (GlcNAc...) asparagine glycans are attached at residues asparagine 86 and asparagine 103. Cystine bridges form between cysteine 102–cysteine 309, cysteine 113–cysteine 301, cysteine 116–cysteine 298, cysteine 121–cysteine 291, and cysteine 129–cysteine 281. Serine 133 carries the phosphoserine modification. 5 N-linked (GlcNAc...) asparagine glycosylation sites follow: asparagine 145, asparagine 277, asparagine 287, asparagine 350, and asparagine 370. At serine 392 the chain carries Phosphoserine. The Nuclear localization signal signature appears at 439–443 (RQKHR).

It belongs to the clusterin family. Antiparallel disulfide-linked heterodimer of an alpha chain and a beta chain. Self-associates and forms higher oligomers. Interacts with a broad range of misfolded proteins, including APP, APOC2 and LYZ. Slightly acidic pH promotes interaction with misfolded proteins. Forms high-molecular weight oligomers upon interaction with misfolded proteins. Interacts with APOA1, LRP2, CLUAP1 and PON1. Interacts with the complement membrane attack complex. Interacts (via alpha chain) with XRCC6. Interacts with SYVN1, COMMD1, BTRC, CUL1 and with ubiquitin and SCF (SKP1-CUL1-F-box protein) E3 ubiquitin-protein ligase complexes. Interacts (via alpha chain) with BAX in stressed cells, where BAX undergoes a conformation change leading to association with the mitochondrial membrane. Does not interact with BAX in unstressed cells. Found in a complex with LTF, CLU, EPPIN and SEMG1. Interacts (immaturely glycosylated pre-secreted form) with HSPA5; this interaction promotes CLU stability and facilitates stress-induced CLU retrotranslocation from the secretory pathway to the mitochondria, thereby reducing stress-induced apoptosis by stabilizing mitochondrial membrane integrity. Interacts with BCL2L1; this interaction releases and activates BAX and promotes cell death. Interacts with TGFBR2 and ACVR1. Interacts (secreted form) with STMN3; this interaction may act as an important modulator during neuronal differentiation. Interacts with VLDLR and LRP8. Proteolytically cleaved on its way through the secretory system, probably within the Golgi lumen. Proteolytic cleavage is not necessary for its chaperone activity. All non-secreted forms are not proteolytically cleaved. Chaperone activity of uncleaved forms is dependent on a non-reducing environment. This proteolytic maturation is disulfide bond formation dependent. Post-translationally, polyubiquitinated, leading to proteasomal degradation. Under cellular stress, the intracellular level of cleaved form is reduced due to proteasomal degradation. In terms of processing, heavily N-glycosylated. About 30% of the protein mass is comprised of complex N-linked carbohydrate. Endoplasmic reticulum (ER) stress induces changes in glycosylation status and increases level of hypoglycosylated forms. Core carbohydrates are essential for chaperone activity. Non-secreted forms are hypoglycosylated or unglycosylated.

Its subcellular location is the secreted. The protein resides in the nucleus. It is found in the cytoplasm. The protein localises to the mitochondrion membrane. It localises to the cytosol. Its subcellular location is the microsome. The protein resides in the endoplasmic reticulum. It is found in the mitochondrion. The protein localises to the perinuclear region. It localises to the cytoplasmic vesicle. Its subcellular location is the secretory vesicle. The protein resides in the chromaffin granule. Functionally, functions as extracellular chaperone that prevents aggregation of non native proteins. Prevents stress-induced aggregation of blood plasma proteins. Inhibits formation of amyloid fibrils by APP, APOC2, B2M, CALCA, CSN3, SNCA and aggregation-prone LYZ variants (in vitro). Does not require ATP. Maintains partially unfolded proteins in a state appropriate for subsequent refolding by other chaperones, such as HSPA8/HSC70. Does not refold proteins by itself. Binding to cell surface receptors triggers internalization of the chaperone-client complex and subsequent lysosomal or proteasomal degradation. When secreted, protects cells against apoptosis and against cytolysis by complement: inhibits assembly of the complement membrane attack complex (MAC) by preventing polymerization of C9 pore component of the MAC complex. Intracellular forms interact with ubiquitin and SCF (SKP1-CUL1-F-box protein) E3 ubiquitin-protein ligase complexes and promote the ubiquitination and subsequent proteasomal degradation of target proteins. Promotes proteasomal degradation of COMMD1 and IKBKB. Modulates NF-kappa-B transcriptional activity. Following stress, promotes apoptosis. Inhibits apoptosis when associated with the mitochondrial membrane by interference with BAX-dependent release of cytochrome c into the cytoplasm. Plays a role in the regulation of cell proliferation. An intracellular form suppresses stress-induced apoptosis by stabilizing mitochondrial membrane integrity through interaction with HSPA5. Secreted form does not affect caspase or BAX-mediated intrinsic apoptosis and TNF-induced NF-kappa-B-activity. Secreted form act as an important modulator during neuronal differentiation through interaction with STMN3. Plays a role in the clearance of immune complexes that arise during cell injury. This chain is Clusterin (CLU), found in Canis lupus familiaris (Dog).